The chain runs to 289 residues: MENEFTYEDYETTAKWLLQHTEYRPQVAVICGSGLGGLTAHLKEAQIFDYNEIPNFPQSTVQGHAGRLVFGLLNGRCCVMMQGRFHMYEGYSLSKVTFPVRVFHLLGVETLVVTNAAGGLNPNFEVGDIMLIRDHINLPGFCGQNPLRGPNDERFGVRFPAMSDAYDRDMRQKAFTAWKQMGEQRKLQEGTYVMLAGPNFETVAESRLLKMLGADAVGMSTVPEVIVARHCGLRVFGFSLITNKVVMDYENLEKANHMEVLDAGKAAAQTLERFVSILMESIPLPDRGS.

The residue at position 1 (Met-1) is an N-acetylmethionine. Residues Ser-33, His-64, and 84–86 (RFH) each bind phosphate. Residue Tyr-88 coordinates a purine D-ribonucleoside. Ala-116 is a binding site for phosphate. Positions 201 and 219 each coordinate a purine D-ribonucleoside. Ser-220 contacts phosphate. Residues Asn-243 and His-257 each coordinate a purine D-ribonucleoside.

This sequence belongs to the PNP/MTAP phosphorylase family. As to quaternary structure, homotrimer.

The protein localises to the cytoplasm. It carries out the reaction inosine + phosphate = alpha-D-ribose 1-phosphate + hypoxanthine. The enzyme catalyses guanosine + phosphate = alpha-D-ribose 1-phosphate + guanine. It catalyses the reaction 2'-deoxyguanosine + phosphate = 2-deoxy-alpha-D-ribose 1-phosphate + guanine. The catalysed reaction is 2'-deoxyinosine + phosphate = 2-deoxy-alpha-D-ribose 1-phosphate + hypoxanthine. The protein operates within purine metabolism; purine nucleoside salvage. Functionally, catalyzes the phosphorolytic breakdown of the N-glycosidic bond in the beta-(deoxy)ribonucleoside molecules, with the formation of the corresponding free purine bases and pentose-1-phosphate. Preferentially acts on 6-oxopurine nucleosides including inosine and guanosine. This chain is Purine nucleoside phosphorylase (Pnp), found in Mus musculus (Mouse).